The following is a 134-amino-acid chain: Large ribosomal subunit protein uL16c (134 aa).

Belongs to the universal ribosomal protein uL16 family. As to quaternary structure, part of the 50S ribosomal subunit.

It localises to the plastid. Its subcellular location is the chloroplast. The polypeptide is Large ribosomal subunit protein uL16c (Gnetum parvifolium (Small-leaved jointfir)).